The following is a 471-amino-acid chain: MLRWGVMSENIMRIIDLRGQNLSRAELLAAMPRAAMGTSEATDLVRPILDDVKERGAAALRDFEEKFDHVRPKNLRVPVEAIKDALTTLDPEVRAAIEESVRRARAVAANQVPKDFYTDLAEGARVAERWIPIQRVGLYVPGGKAVYPSSVIMNAVPAQAAGVESLAIATPPARDNEEGLPNKTILATCAILGVDEVYAVGGAQAIAMFAYGAKGSEPQDGDILCDPVDKITGPGNIFVATAKSLVSAFVGIDAVAGPTEIGIIADETANPSLLAADLIGQAEHDELAGSVLFTDSTEIADKVQESLKYRVPRTEHAERVHTSLSGTQSAIVLTDGLDQSIDAANAYAAEHLEIQTKDADAVVKRIKNAGAIFRGPYSPVPLGDYMSGSNHVLPTGGTARFAAGLGVHTFMKPVEVIEYDEEGLKALAARINAFAVSEDLPAHGECVLSRFVKDPYDKATLREQEKEAGLR.

NAD(+) is bound by residues Tyr139, Gln204, and Asn236. Substrate contacts are provided by Thr259, Gln281, and His284. 2 residues coordinate Zn(2+): Gln281 and His284. Residues Glu350 and His351 each act as proton acceptor in the active site. Residues His351, Asp384, Glu438, and His443 each coordinate substrate. Asp384 serves as a coordination point for Zn(2+). His443 contributes to the Zn(2+) binding site.

This sequence belongs to the histidinol dehydrogenase family. The cofactor is Zn(2+).

The catalysed reaction is L-histidinol + 2 NAD(+) + H2O = L-histidine + 2 NADH + 3 H(+). It participates in amino-acid biosynthesis; L-histidine biosynthesis; L-histidine from 5-phospho-alpha-D-ribose 1-diphosphate: step 9/9. In terms of biological role, catalyzes the sequential NAD-dependent oxidations of L-histidinol to L-histidinaldehyde and then to L-histidine. In Bifidobacterium longum (strain NCC 2705), this protein is Histidinol dehydrogenase.